A 317-amino-acid chain; its full sequence is 2,3-dihydroxyphenylpropionate/2,3-dihydroxicinnamic acid 1,2-dioxygenase 2 (317 aa).

Residue histidine 115 is the Proton donor of the active site. Histidine 179 acts as the Proton acceptor in catalysis.

Belongs to the LigB/MhpB extradiol dioxygenase family. Homotetramer. The cofactor is Fe(2+).

The catalysed reaction is 3-(2,3-dihydroxyphenyl)propanoate + O2 = (2Z,4E)-2-hydroxy-6-oxonona-2,4-dienedioate + H(+). It carries out the reaction (2E)-3-(2,3-dihydroxyphenyl)prop-2-enoate + O2 = (2Z,4E,7E)-2-hydroxy-6-oxonona-2,4,7-trienedioate + H(+). Its pathway is aromatic compound metabolism; 3-phenylpropanoate degradation. Catalyzes the non-heme iron(II)-dependent oxidative cleavage of 2,3-dihydroxyphenylpropionic acid and 2,3-dihydroxicinnamic acid into 2-hydroxy-6-ketononadienedioate and 2-hydroxy-6-ketononatrienedioate, respectively. The sequence is that of 2,3-dihydroxyphenylpropionate/2,3-dihydroxicinnamic acid 1,2-dioxygenase 2 from Dechloromonas aromatica (strain RCB).